The following is a 269-amino-acid chain: Putative aga operon transcriptional repressor (269 aa).

Positions 15-70 (TSERREQIIQRLRQQGSVQVNDLSALYGVSTVTIRNDLAFLEKQGIAVRAYGGALI) constitute an HTH deoR-type domain. A DNA-binding region (H-T-H motif) is located at residues 32–51 (VQVNDLSALYGVSTVTIRND).

In terms of biological role, probable repressor for the aga operon for N-acetyl galactosamine transport and metabolism. This chain is Putative aga operon transcriptional repressor (agaR), found in Escherichia coli O157:H7.